A 314-amino-acid chain; its full sequence is DNA-directed RNA polymerase subunit alpha (314 aa).

The tract at residues methionine 1 to threonine 228 is alpha N-terminal domain (alpha-NTD). Positions lysine 245–aspartate 314 are alpha C-terminal domain (alpha-CTD).

The protein belongs to the RNA polymerase alpha chain family. In terms of assembly, homodimer. The RNAP catalytic core consists of 2 alpha, 1 beta, 1 beta' and 1 omega subunit. When a sigma factor is associated with the core the holoenzyme is formed, which can initiate transcription.

It catalyses the reaction RNA(n) + a ribonucleoside 5'-triphosphate = RNA(n+1) + diphosphate. Its function is as follows. DNA-dependent RNA polymerase catalyzes the transcription of DNA into RNA using the four ribonucleoside triphosphates as substrates. This Staphylococcus aureus (strain bovine RF122 / ET3-1) protein is DNA-directed RNA polymerase subunit alpha.